A 443-amino-acid polypeptide reads, in one-letter code: Mimosinase, chloroplastic (443 aa).

The N-terminal 43 residues, 1 to 43, are a transit peptide targeting the chloroplast; the sequence is MALSSTFLNPLVSSVAVNPQPKITSGKGFRVNCLIRTQQTVIK. Residues tyrosine 105, arginine 107, glycine 135, methionine 136, serine 254, and threonine 256 each contribute to the pyridoxal 5'-phosphate site. Lysine 257 is subject to N6-(pyridoxal phosphate)lysine.

This sequence belongs to the trans-sulfuration enzymes family. Forms homodimers. May form homotetramers from two homodimers. Pyridoxal 5'-phosphate serves as cofactor.

It is found in the plastid. It localises to the chloroplast. It carries out the reaction L-mimosine + H2O = 3-hydroxy-4H-pyrid-4-one + pyruvate + NH4(+). Its function is as follows. Catalyzes the degradation of mimosine, which is a toxic secondary metabolite found in all Leucaena and Mimosa species. The sequence is that of Mimosinase, chloroplastic from Leucaena leucocephala (White popinac).